A 113-amino-acid polypeptide reads, in one-letter code: U11-theraphotoxin-Hhn1t (113 aa).

The signal sequence occupies residues 1–21 (MNTVRVTFLLVFVLAVSLGQA). The propeptide occupies 22–74 (DKDENRMEMQEKTEQGKSYLDFAENLLLQKLEELEAKLLEEDSEESRNSRQKR). The span at 60–69 (LEEDSEESRN) shows a compositional bias: basic and acidic residues. The segment at 60–83 (LEEDSEESRNSRQKRCIGEGVPCD) is disordered. 3 disulfide bridges follow: Cys75-Cys90, Cys82-Cys95, and Cys89-Cys110.

This sequence belongs to the neurotoxin 14 (magi-1) family. 01 (HNTX-16) subfamily. Expressed by the venom gland.

The protein localises to the secreted. Probable ion channel inhibitor. The sequence is that of U11-theraphotoxin-Hhn1t from Cyriopagopus hainanus (Chinese bird spider).